The primary structure comprises 398 residues: Na(+)/H(+) antiporter NhaA 2 (398 aa).

11 helical membrane-spanning segments follow: residues 17–37 (ILLM…LAGL), 59–79 (LLLW…GLEV), 95–115 (SLPT…YLGF), 125–145 (GWAI…ALLG), 154–174 (VFLL…IALF), 179–199 (LSIT…ILNL), 213–233 (LLLW…GVVI), 262–282 (FMIL…GMSL), 288–308 (PAAL…VLLF), 331–351 (AVAV…SLAF), and 364–384 (LGTL…LTKV).

This sequence belongs to the NhaA Na(+)/H(+) (TC 2.A.33) antiporter family.

Its subcellular location is the cell inner membrane. It carries out the reaction Na(+)(in) + 2 H(+)(out) = Na(+)(out) + 2 H(+)(in). Its function is as follows. Na(+)/H(+) antiporter that extrudes sodium in exchange for external protons. The chain is Na(+)/H(+) antiporter NhaA 2 from Shewanella denitrificans (strain OS217 / ATCC BAA-1090 / DSM 15013).